Here is a 759-residue protein sequence, read N- to C-terminus: Subtilisin-like serine-protease S (759 aa).

The N-terminal stretch at 1 to 22 is a signal peptide; the sequence is MGSAKILSFTLLLFVGYTLVHG. In terms of domain architecture, Inhibitor I9 spans 28 to 105; that stretch reads YIVYMGDRSH…SVFESKMNKL (78 aa). The Peptidase S8 domain occupies 110 to 613; it reads SWDFLGLDTV…SGHVNPVASL (504 aa). Asp139 acts as the Charge relay system in catalysis. Asn170 carries N-linked (GlcNAc...) asparagine glycosylation. The Charge relay system role is filled by His215. 2 N-linked (GlcNAc...) asparagine glycosylation sites follow: Asn230 and Asn388. The 73-residue stretch at 390–462 folds into the PA domain; sequence SFCKEHTLDP…MIGQDAVEEL (73 aa). Residue Ser545 is the Charge relay system of the active site. N-linked (GlcNAc...) asparagine glycosylation is found at Asn593, Asn642, and Asn671.

It belongs to the peptidase S8 family.

The protein resides in the secreted. It localises to the extracellular space. The protein localises to the apoplast. Required for arbuscular mycorrhiza (AM) development during AM symbiosis with AM fungi (e.g. Glomeromycota intraradices). This is Subtilisin-like serine-protease S from Lotus japonicus (Lotus corniculatus var. japonicus).